The sequence spans 247 residues: Chaperone protein AfaB (247 aa).

Residues Met1–Ala29 form the signal peptide.

It belongs to the periplasmic pilus chaperone family.

It localises to the periplasm. Involved in the biogenesis of the AFA-III afimbrial adhesin. The protein is Chaperone protein AfaB (afaB) of Escherichia coli.